The sequence spans 99 residues: Plastocyanin (99 aa).

The region spanning 1 to 99 (IEILLGGDDG…AGMVGKVTVN (99 aa)) is the Plastocyanin-like domain. Cu cation contacts are provided by H37, C84, H87, and M92.

Belongs to the plastocyanin family. Cu(2+) is required as a cofactor.

The protein resides in the plastid. It localises to the chloroplast thylakoid membrane. In terms of biological role, participates in electron transfer between P700 and the cytochrome b6-f complex in photosystem I. The protein is Plastocyanin (PETE) of Cucumis sativus (Cucumber).